A 108-amino-acid polypeptide reads, in one-letter code: Class I hydrophobin 3 (108 aa).

The signal sequence occupies residues 1–17 (MFSRVFAVASLAALALA). 4 cysteine pairs are disulfide-bonded: cysteine 26–cysteine 87, cysteine 33–cysteine 81, cysteine 34–cysteine 67, and cysteine 88–cysteine 101.

It belongs to the fungal hydrophobin family. Self-assembles to form functional amyloid fibrils called rodlets. Self-assembly into fibrillar rodlets occurs spontaneously at hydrophobic:hydrophilic interfaces and the rodlets further associate laterally to form amphipathic monolayers.

The protein localises to the secreted. The protein resides in the cell wall. Its function is as follows. Aerial growth, conidiation, and dispersal of filamentous fungi in the environment rely upon a capability of their secreting small amphipathic proteins called hydrophobins (HPBs) with low sequence identity. Class I can self-assemble into an outermost layer of rodlet bundles on aerial cell surfaces, conferring cellular hydrophobicity that supports fungal growth, development and dispersal; whereas Class II form highly ordered films at water-air interfaces through intermolecular interactions but contribute nothing to the rodlet structure. The polypeptide is Class I hydrophobin 3 (Pisolithus tinctorius (Dead man's foot)).